A 151-amino-acid polypeptide reads, in one-letter code: UPF0178 protein Desal_2673 (151 aa).

Belongs to the UPF0178 family.

In Maridesulfovibrio salexigens (strain ATCC 14822 / DSM 2638 / NCIMB 8403 / VKM B-1763) (Desulfovibrio salexigens), this protein is UPF0178 protein Desal_2673.